Consider the following 420-residue polypeptide: DNA primase small subunit (420 aa).

M1 is subject to N-acetylmethionine. Residues E44, D109, and D111 contribute to the active site. The Mg(2+) site is built by D109 and D111. Mn(2+) is bound by residues D109 and D111. 109 to 111 (DID) lines the a ribonucleoside 5'-triphosphate pocket. Zn(2+) contacts are provided by C121, C122, C128, and C131. The Zinc knuckle motif motif lies at 121–131 (CCSSADICPKC). 160-166 (SGRRGVH) contributes to the a ribonucleoside 5'-triphosphate binding site. A Mg(2+)-binding site is contributed by D306. D306 is a Mn(2+) binding site. Residues 315–318 (HLLK) and H324 each bind a ribonucleoside 5'-triphosphate. Positions 363-373 (NEEEKEENEAE) are enriched in acidic residues. Positions 363–382 (NEEEKEENEAESDVKHRTRD) are disordered.

Belongs to the eukaryotic-type primase small subunit family. In terms of assembly, heterodimer of a catalytic subunit PRIM1 and a regulatory subunit PRIM2, also known as the DNA primase complex. Interacts with PRIM2 (via C-terminus). Component of the alpha DNA polymerase complex (also known as the alpha DNA polymerase-primase complex) consisting of four subunits: the catalytic subunit POLA1, the regulatory subunit POLA2, and the primase complex subunits PRIM1 and PRIM2 respectively. Within the complex, POLA1 directly interacts with PRIM2. Mg(2+) is required as a cofactor. The cofactor is Mn(2+).

The catalysed reaction is ssDNA + n NTP = ssDNA/pppN(pN)n-1 hybrid + (n-1) diphosphate.. Its activity is regulated as follows. The presence of the regulatory subunit PRIM2/p58 accelerates the kinetics of initiation and primer extension. Inhibited by arabinose nucleoside derivatives such as fludarabine and vidarabine. Its function is as follows. Catalytic subunit of the DNA primase complex and component of the DNA polymerase alpha complex (also known as the alpha DNA polymerase-primase complex - primosome/replisome) which play an essential role in the initiation of DNA synthesis. During the S phase of the cell cycle, the DNA polymerase alpha complex (composed of a catalytic subunit POLA1, an accessory subunit POLA2 and two primase subunits, the catalytic subunit PRIM1 and the regulatory subunit PRIM2) is recruited to DNA at the replicative forks via direct interactions with MCM10 and WDHD1. The primase subunit of the polymerase alpha complex initiates DNA synthesis by oligomerising short RNA primers on both leading and lagging strands. These primers are initially extended by the polymerase alpha catalytic subunit and subsequently transferred to polymerase delta and polymerase epsilon for processive synthesis on the lagging and leading strand, respectively. In the primase complex, both subunits are necessary for the initial di-nucleotide formation, but the extension of the primer depends only on the catalytic subunit. Synthesizes 9-mer RNA primers (also known as the 'unit length' RNA primers). Incorporates only ribonucleotides in the presence of ribo- and deoxy-nucleotide triphosphates (rNTPs, dNTPs). Requires template thymine or cytidine to start the RNA primer synthesis, with an adenine or guanine at its 5'-end. Binds single stranded DNA. This is DNA primase small subunit (PRIM1) from Homo sapiens (Human).